We begin with the raw amino-acid sequence, 83 residues long: Calsensin (83 aa).

EF-hand domains are found at residues 4–39 (KVKA…LDAY) and 46–81 (KVKE…LLCQ). Positions 17, 19, 21, 23, 28, 59, 61, 63, 65, and 70 each coordinate Ca(2+).

In terms of tissue distribution, selectively expressed in a small group of neurons.

It localises to the cytoplasm. Functionally, may function as a trigger protein which interacts with a larger protein. May mediate calcium-dependent signal transduction events in the growth cones and axons of a small group of sensory neurons which fasciculate in a single axon tract. The sequence is that of Calsensin from Haemopis marmorata (Green horse leech).